We begin with the raw amino-acid sequence, 209 residues long: A-type ATP synthase subunit D (209 aa).

This sequence belongs to the V-ATPase D subunit family. As to quaternary structure, has multiple subunits with at least A(3), B(3), C, D, E, F, H, I and proteolipid K(x).

The protein resides in the cell membrane. Component of the A-type ATP synthase that produces ATP from ADP in the presence of a proton gradient across the membrane. The chain is A-type ATP synthase subunit D from Methanoregula boonei (strain DSM 21154 / JCM 14090 / 6A8).